The chain runs to 156 residues: 6,7-dimethyl-8-ribityllumazine synthase (156 aa).

5-amino-6-(D-ribitylamino)uracil-binding positions include F22, 56-58 (ALE), and 80-82 (AVI). 85-86 (DT) contacts (2S)-2-hydroxy-3-oxobutyl phosphate. H88 functions as the Proton donor in the catalytic mechanism. F113 contributes to the 5-amino-6-(D-ribitylamino)uracil binding site. R127 contacts (2S)-2-hydroxy-3-oxobutyl phosphate.

This sequence belongs to the DMRL synthase family.

It catalyses the reaction (2S)-2-hydroxy-3-oxobutyl phosphate + 5-amino-6-(D-ribitylamino)uracil = 6,7-dimethyl-8-(1-D-ribityl)lumazine + phosphate + 2 H2O + H(+). It participates in cofactor biosynthesis; riboflavin biosynthesis; riboflavin from 2-hydroxy-3-oxobutyl phosphate and 5-amino-6-(D-ribitylamino)uracil: step 1/2. Functionally, catalyzes the formation of 6,7-dimethyl-8-ribityllumazine by condensation of 5-amino-6-(D-ribitylamino)uracil with 3,4-dihydroxy-2-butanone 4-phosphate. This is the penultimate step in the biosynthesis of riboflavin. This is 6,7-dimethyl-8-ribityllumazine synthase from Leuconostoc mesenteroides subsp. mesenteroides (strain ATCC 8293 / DSM 20343 / BCRC 11652 / CCM 1803 / JCM 6124 / NCDO 523 / NBRC 100496 / NCIMB 8023 / NCTC 12954 / NRRL B-1118 / 37Y).